The following is a 45-amino-acid chain: Cytochrome b559 subunit beta (45 aa).

A helical membrane pass occupies residues 20-36 (WLALHTLGIPTVFFLGA). Heme is bound at residue His-24.

The protein belongs to the PsbE/PsbF family. In terms of assembly, heterodimer of an alpha subunit and a beta subunit. PSII is composed of 1 copy each of membrane proteins PsbA, PsbB, PsbC, PsbD, PsbE, PsbF, PsbH, PsbI, PsbJ, PsbK, PsbL, PsbM, PsbT, PsbX, PsbY, PsbZ, Psb30/Ycf12, peripheral proteins PsbO, CyanoQ (PsbQ), PsbU, PsbV and a large number of cofactors. It forms dimeric complexes. Heme b serves as cofactor.

The protein localises to the cellular thylakoid membrane. In terms of biological role, this b-type cytochrome is tightly associated with the reaction center of photosystem II (PSII). PSII is a light-driven water:plastoquinone oxidoreductase that uses light energy to abstract electrons from H(2)O, generating O(2) and a proton gradient subsequently used for ATP formation. It consists of a core antenna complex that captures photons, and an electron transfer chain that converts photonic excitation into a charge separation. The sequence is that of Cytochrome b559 subunit beta from Synechococcus sp. (strain CC9902).